The chain runs to 1075 residues: Protein EXPORTIN 1A (1075 aa).

Residues 37–103 (ADQILRDLQA…KNYISEVIVQ (67 aa)) form the Importin N-terminal domain. 12 HEAT repeats span residues 91–130 (DGMK…QIVK), 135–171 (AKWT…EVFD), 232–267 (IFES…LNFG), 336–373 (SLLL…ELFD), 388–425 (MGLQ…LMIN), 474–513 (DTEK…SMAE), 563–600 (KFLK…KCKR), 612–649 (PFVS…AESD), 682–719 (LKDQ…IFLD), 756–793 (RETL…DYAR), 798–835 (ARES…CTLE), and 894–934 (ETGL…VLTD).

This sequence belongs to the exportin family. Interacts with RAN1. As to expression, expressed ubiquitously, with higher levels in stems, inflorescences and roots. Present in mature pollen grains, unpollinated pistils, and 2-week-old seedlings.

It is found in the nucleus. The protein resides in the nuclear pore complex. Its subcellular location is the nucleus membrane. Receptor for the leucine-rich nuclear export signal (NES). Binds cooperatively to the NES on its target protein and to the small GTPase Ran in its active GTP-bound form. Required for the maternal-to-embryonic transition and during gametophyte development. Involved in heat-induced oxidative stress basal resistance. In Arabidopsis thaliana (Mouse-ear cress), this protein is Protein EXPORTIN 1A.